Reading from the N-terminus, the 95-residue chain is Co-chaperonin GroES (95 aa).

This sequence belongs to the GroES chaperonin family. In terms of assembly, heptamer of 7 subunits arranged in a ring. Interacts with the chaperonin GroEL.

The protein resides in the cytoplasm. Its function is as follows. Together with the chaperonin GroEL, plays an essential role in assisting protein folding. The GroEL-GroES system forms a nano-cage that allows encapsulation of the non-native substrate proteins and provides a physical environment optimized to promote and accelerate protein folding. GroES binds to the apical surface of the GroEL ring, thereby capping the opening of the GroEL channel. The protein is Co-chaperonin GroES of Desulfatibacillum aliphaticivorans.